A 478-amino-acid chain; its full sequence is tRNA modification GTPase MnmE (478 aa).

Residues R25, E82, and K135 each contribute to the (6S)-5-formyl-5,6,7,8-tetrahydrofolate site. The TrmE-type G domain occupies G231 to G400. N241 contributes to the K(+) binding site. Residues N241–S246, T260–T266, and D285–G288 each bind GTP. Residue S245 coordinates Mg(2+). Positions 260, 262, and 265 each coordinate K(+). T266 is a Mg(2+) binding site. (6S)-5-formyl-5,6,7,8-tetrahydrofolate is bound at residue K478.

This sequence belongs to the TRAFAC class TrmE-Era-EngA-EngB-Septin-like GTPase superfamily. TrmE GTPase family. In terms of assembly, homodimer. Heterotetramer of two MnmE and two MnmG subunits. K(+) is required as a cofactor.

The protein resides in the cytoplasm. Its function is as follows. Exhibits a very high intrinsic GTPase hydrolysis rate. Involved in the addition of a carboxymethylaminomethyl (cmnm) group at the wobble position (U34) of certain tRNAs, forming tRNA-cmnm(5)s(2)U34. The polypeptide is tRNA modification GTPase MnmE (Polaromonas naphthalenivorans (strain CJ2)).